The sequence spans 69 residues: uncharacterized protein (69 aa).

This is an uncharacterized protein from Salmonella paratyphi A (strain ATCC 9150 / SARB42).